The chain runs to 431 residues: Serine--tRNA ligase (431 aa).

Residue 237–239 (TAE) coordinates L-serine. 268-270 (RSE) is an ATP binding site. Position 291 (Glu291) interacts with L-serine. ATP is bound at residue 355–358 (EISS). Residue Ser390 coordinates L-serine.

Belongs to the class-II aminoacyl-tRNA synthetase family. Type-1 seryl-tRNA synthetase subfamily. In terms of assembly, homodimer. The tRNA molecule binds across the dimer.

It is found in the cytoplasm. It carries out the reaction tRNA(Ser) + L-serine + ATP = L-seryl-tRNA(Ser) + AMP + diphosphate + H(+). The catalysed reaction is tRNA(Sec) + L-serine + ATP = L-seryl-tRNA(Sec) + AMP + diphosphate + H(+). Its pathway is aminoacyl-tRNA biosynthesis; selenocysteinyl-tRNA(Sec) biosynthesis; L-seryl-tRNA(Sec) from L-serine and tRNA(Sec): step 1/1. Its function is as follows. Catalyzes the attachment of serine to tRNA(Ser). Is also able to aminoacylate tRNA(Sec) with serine, to form the misacylated tRNA L-seryl-tRNA(Sec), which will be further converted into selenocysteinyl-tRNA(Sec). This Neisseria gonorrhoeae (strain NCCP11945) protein is Serine--tRNA ligase.